The primary structure comprises 411 residues: Putative competence-damage inducible protein (411 aa).

The protein belongs to the CinA family.

The polypeptide is Putative competence-damage inducible protein (Alkaliphilus metalliredigens (strain QYMF)).